Here is a 770-residue protein sequence, read N- to C-terminus: Formate acetyltransferase (770 aa).

The PFL domain occupies 5–635 (NEMQKLAWAG…KTGNTPDGRR (631 aa)). The active-site S-acetylcysteine intermediate is Cys-419. Cys-420 acts as the Cysteine radical intermediate in catalysis. Positions 642–770 (PGANPMHGRD…VITRTFTESM (129 aa)) constitute a Glycine radical domain. A Glycine radical modification is found at Gly-745.

This sequence belongs to the glycyl radical enzyme (GRE) family. PFL subfamily. Homodimer.

It localises to the cytoplasm. It carries out the reaction formate + acetyl-CoA = pyruvate + CoA. The protein operates within fermentation; pyruvate fermentation; formate from pyruvate: step 1/1. Catalyzes the conversion of pyruvate to formate and acetyl-CoA. This is Formate acetyltransferase (pflB) from Haemophilus influenzae (strain ATCC 51907 / DSM 11121 / KW20 / Rd).